A 69-amino-acid polypeptide reads, in one-letter code: Beta-defensin 122 (69 aa).

Residues 1–19 form the signal peptide; it reads MKPFLVTLAVLLLFFQVTA. 3 disulfide bridges follow: C26–C53, C33–C47, and C37–C54.

Belongs to the beta-defensin family.

It localises to the secreted. Its function is as follows. Has antibacterial activity. The chain is Beta-defensin 122 (DEFB122) from Macaca mulatta (Rhesus macaque).